The primary structure comprises 326 residues: MKPKLNDVAKLAGVSATTVSRVINNHGYLSSQTKEKVFAAMRELHYQPNNMARSLQGKNTRLIGVIFSDISNPFFGELVSRIEKILFAKNYKVILCNSADDPQKERDYLQMLMANQVDGIIAGAHNLGIEEYQQYGLPIISFDRYLSDNIPIVSSDNYQGGWLATQTLHQAGATNVAIFTGKSHAGSPTNGRREGYEAYLTAQQLTPHVHELPFELTPALKMMEIKTIMTQHQYDGIFCSDDLAALLVLNVAQQLSLTVPEQLRVVGYDGTALIRDYHSELTTVEQPLADISTLLVSLLLQRIEDANCTLESKYTLPVKLIKGFTA.

The HTH lacI-type domain maps to Met1–Gly57. The segment at residues Leu5–Asn24 is a DNA-binding region (H-T-H motif).

In terms of biological role, negative regulator of scrB expression. This chain is Sucrose operon repressor (scrR), found in Pediococcus pentosaceus.